A 27-amino-acid chain; its full sequence is Protein YqfI (27 aa).

The chain is Protein YqfI from Escherichia coli (strain K12).